The primary structure comprises 493 residues: Probable protein phosphatase 2C 40 (493 aa).

Residues 145–480 enclose the PPM-type phosphatase domain; the sequence is LLSAMEVQVA…DDVTIMVITL (336 aa). Mn(2+)-binding residues include D180, G181, D408, and D471.

Belongs to the PP2C family. Requires Mg(2+) as cofactor. Mn(2+) is required as a cofactor.

It catalyses the reaction O-phospho-L-seryl-[protein] + H2O = L-seryl-[protein] + phosphate. The enzyme catalyses O-phospho-L-threonyl-[protein] + H2O = L-threonyl-[protein] + phosphate. The polypeptide is Probable protein phosphatase 2C 40 (Arabidopsis thaliana (Mouse-ear cress)).